Reading from the N-terminus, the 185-residue chain is Lactoylglutathione lyase (185 aa).

The tract at residues 1 to 21 (MASEAKESPANNPGLSTVRDE) is disordered. Positions 27-174 (IMQQTMFRVK…DGYWIEIFDL (148 aa)) constitute a VOC domain. Substrate contacts are provided by Gln-30 and Arg-34. Zn(2+) is bound at residue Gln-30. Glu-96 serves as a coordination point for Zn(2+). Substrate contacts are provided by residues Asn-100, Arg-120, His-124, and 154-155 (KM). His-124 contributes to the Zn(2+) binding site. Glu-170 contacts Zn(2+). Catalysis depends on Glu-170, which acts as the Proton donor/acceptor.

This sequence belongs to the glyoxalase I family. Zn(2+) is required as a cofactor.

The catalysed reaction is (R)-S-lactoylglutathione = methylglyoxal + glutathione. Its pathway is secondary metabolite metabolism; methylglyoxal degradation; (R)-lactate from methylglyoxal: step 1/2. Functionally, catalyzes the conversion of hemimercaptal, formed from methylglyoxal and glutathione, to S-lactoylglutathione. The sequence is that of Lactoylglutathione lyase (GLY I) from Brassica juncea (Indian mustard).